A 164-amino-acid chain; its full sequence is Phosphopantetheine adenylyltransferase (164 aa).

Serine 10 is a substrate binding site. Residues 10–11 (SF) and histidine 18 contribute to the ATP site. Lysine 42, leucine 74, and arginine 88 together coordinate substrate. Residues 89–91 (GLR), glutamate 99, and 124–130 (YSFLSSS) contribute to the ATP site.

The protein belongs to the bacterial CoaD family. In terms of assembly, homohexamer. Mg(2+) serves as cofactor.

The protein localises to the cytoplasm. It carries out the reaction (R)-4'-phosphopantetheine + ATP + H(+) = 3'-dephospho-CoA + diphosphate. The protein operates within cofactor biosynthesis; coenzyme A biosynthesis; CoA from (R)-pantothenate: step 4/5. Functionally, reversibly transfers an adenylyl group from ATP to 4'-phosphopantetheine, yielding dephospho-CoA (dPCoA) and pyrophosphate. This Bacillus licheniformis (strain ATCC 14580 / DSM 13 / JCM 2505 / CCUG 7422 / NBRC 12200 / NCIMB 9375 / NCTC 10341 / NRRL NRS-1264 / Gibson 46) protein is Phosphopantetheine adenylyltransferase.